We begin with the raw amino-acid sequence, 135 residues long: Small ribosomal subunit protein bS6 (135 aa).

The residue at position 93 (Lys-93) is an N6-acetyllysine. The tract at residues 98-135 (EASPMVKAKDERRERRDDFANETADDAEAGDSEEEEEE) is disordered. Positions 104–116 (KAKDERRERRDDF) are enriched in basic and acidic residues. Residues 120–135 (TADDAEAGDSEEEEEE) are compositionally biased toward acidic residues.

The protein belongs to the bacterial ribosomal protein bS6 family. Part of the 30S ribosomal subunit. Interacts weakly with uL2 in one of the 3.5 A resolved structures. In terms of processing, 5 different forms of the protein, varying only in the number of C-terminal glutamate residues, were isolated. The sequence shown is form bS6-6, which is the longest. The first two Glu are encoded by the rpsF gene, the other Glu are added post-translationally by the RimK enzyme.

Its function is as follows. Binds together with bS18 to 16S ribosomal RNA. The sequence is that of Small ribosomal subunit protein bS6 (rpsF) from Escherichia coli (strain K12).